Consider the following 85-residue polypeptide: MLSFLVSLVVAIVIGLIGSAIVGNRLPGGIFGSMIAGLIGAWIGHGLLGTWGPSLAGFAIFPAIIGAAIFVFLLGLIFRGLRKEA.

3 helical membrane-spanning segments follow: residues 2-22 (LSFL…SAIV), 28-48 (GGIF…HGLL), and 58-78 (FAIF…GLIF).

Belongs to the UPF0410 family.

It is found in the cell membrane. The chain is UPF0410 protein YdaS (ydaS) from Bacillus subtilis (strain 168).